The primary structure comprises 367 residues: Viral cathepsin (367 aa).

The first 25 residues, 1 to 25 (MRKYHSNIMHKIITFVSLLWTFVVC), serve as a signal peptide directing secretion. Positions 26–156 (DEISLHTSSS…IVKGAPDIRL (131 aa)) are cleaved as a propeptide — activation peptide. Asn-103 and Asn-135 each carry an N-linked (GlcNAc...) asparagine; by host glycan. 3 cysteine pairs are disulfide-bonded: Cys-177–Cys-218, Cys-211–Cys-251, and Cys-306–Cys-354. Residue Cys-180 is part of the active site. Active-site residues include His-313 and Asn-333.

This sequence belongs to the peptidase C1 family. Synthesized as an inactive proenzyme and activated by proteolytic removal of the inhibitory propeptide.

The enzyme catalyses Endopeptidase of broad specificity, hydrolyzing substrates of both cathepsin L and cathepsin B.. Functionally, cysteine protease that plays an essential role in host liquefaction to facilitate horizontal transmission of the virus. May participate in the degradation of foreign protein expressed by the baculovirus system. This is Viral cathepsin (VCATH) from Lepidoptera (butterflies and moths).